The primary structure comprises 596 residues: Aspartic proteinase MKC7 (596 aa).

The signal sequence occupies residues 1 to 22 (MKLSVLTFVVDALLVCSSIVDA). Residues 23-65 (GVTDFPSLPSNEVYVKMNFQKKYGSSFENALDDTKGRTRLMTR) constitute a propeptide that is removed on maturation. The 388-residue stretch at 81–468 (YSVELDIGTP…DLDNMEISMA (388 aa)) folds into the Peptidase A1 domain. D99 is an active-site residue. Residues N180, N190, N219, N229, N232, N286, and N346 are each glycosylated (N-linked (GlcNAc...) asparagine). D360 is a catalytic residue. 2 N-linked (GlcNAc...) asparagine glycosylation sites follow: N471 and N517. Low complexity predominate over residues 530–570 (ATSSSSSKGQKTQTSTTALSISKSTSSTSSTGMLSPTSSSS). A disordered region spans residues 530-578 (ATSSSSSKGQKTQTSTTALSISKSTSSTSSTGMLSPTSSSSTRKENGGH). N575 is lipidated: GPI-anchor amidated asparagine. Residues 576 to 596 (GGHNLNPPFFARFITAIFHHI) constitute a propeptide, removed in mature form.

The protein belongs to the peptidase A1 family.

The protein resides in the cell membrane. It carries out the reaction Hydrolyzes various precursor proteins with Arg or Lys in P1, and commonly Arg or Lys also in P2. The P3 amino acid is usually non-polar, but otherwise additional basic amino acids are favorable in both non-prime and prime positions.. Functionally, cleaves proteins C-terminally to the most C-terminal basic residue. Can process the alpha-mating factor precursor. Required for cell wall integrity. This is Aspartic proteinase MKC7 (MKC7) from Saccharomyces cerevisiae (strain ATCC 204508 / S288c) (Baker's yeast).